The chain runs to 231 residues: Uracil-DNA glycosylase (231 aa).

The active-site Proton acceptor is D71.

The protein belongs to the uracil-DNA glycosylase (UDG) superfamily. UNG family.

The protein resides in the cytoplasm. The enzyme catalyses Hydrolyzes single-stranded DNA or mismatched double-stranded DNA and polynucleotides, releasing free uracil.. Its function is as follows. Excises uracil residues from the DNA which can arise as a result of misincorporation of dUMP residues by DNA polymerase or due to deamination of cytosine. This chain is Uracil-DNA glycosylase, found in Pseudomonas aeruginosa (strain ATCC 15692 / DSM 22644 / CIP 104116 / JCM 14847 / LMG 12228 / 1C / PRS 101 / PAO1).